Consider the following 202-residue polypeptide: uncharacterized protein (202 aa).

This is an uncharacterized protein from Homo sapiens (Human).